The primary structure comprises 263 residues: (R)-S-adenosyl-L-methionine hydrolase (263 aa).

3 residues coordinate adenosine: aspartate 18, aspartate 82, and asparagine 181. (R)-S-adenosyl-L-methionine is bound by residues asparagine 181, tyrosine 221, serine 234, glutamate 239, and methionine 244.

This sequence belongs to the SAM hydrolase / SAM-dependent halogenase family. In terms of assembly, homotrimer.

The catalysed reaction is (R)-S-adenosyl-L-methionine + H2O = adenosine + L-methionine + H(+). Functionally, catalyzes the hydrolysis of S-adenosyl-L-methionine (SAM) into adenosine and L-methionine. Does not have chlorinase or fluorinase activity. The polypeptide is (R)-S-adenosyl-L-methionine hydrolase (Methanocaldococcus jannaschii (strain ATCC 43067 / DSM 2661 / JAL-1 / JCM 10045 / NBRC 100440) (Methanococcus jannaschii)).